The primary structure comprises 815 residues: Lon protease 2 (815 aa).

The region spanning 19–212 is the Lon N-terminal domain; it reads LPVLPLINTV…RLSVVLSQEI (194 aa). 365-372 lines the ATP pocket; the sequence is GPPGVGKT. Residues 601 to 782 enclose the Lon proteolytic domain; sequence RDEIGVATGM…DEVLPIAFVS (182 aa). Active-site residues include serine 688 and lysine 731.

Belongs to the peptidase S16 family. In terms of assembly, homohexamer. Organized in a ring with a central cavity.

Its subcellular location is the cytoplasm. It catalyses the reaction Hydrolysis of proteins in presence of ATP.. Its function is as follows. ATP-dependent serine protease that mediates the selective degradation of mutant and abnormal proteins as well as certain short-lived regulatory proteins. Required for cellular homeostasis and for survival from DNA damage and developmental changes induced by stress. Degrades polypeptides processively to yield small peptide fragments that are 5 to 10 amino acids long. Binds to DNA in a double-stranded, site-specific manner. The chain is Lon protease 2 from Herpetosiphon aurantiacus (strain ATCC 23779 / DSM 785 / 114-95).